Reading from the N-terminus, the 196-residue chain is ATP-dependent Clp protease proteolytic subunit 1 (196 aa).

S96 acts as the Nucleophile in catalysis. Residue H121 is part of the active site.

It belongs to the peptidase S14 family. As to quaternary structure, fourteen ClpP subunits assemble into 2 heptameric rings which stack back to back to give a disk-like structure with a central cavity, resembling the structure of eukaryotic proteasomes.

It is found in the cytoplasm. The enzyme catalyses Hydrolysis of proteins to small peptides in the presence of ATP and magnesium. alpha-casein is the usual test substrate. In the absence of ATP, only oligopeptides shorter than five residues are hydrolyzed (such as succinyl-Leu-Tyr-|-NHMec, and Leu-Tyr-Leu-|-Tyr-Trp, in which cleavage of the -Tyr-|-Leu- and -Tyr-|-Trp bonds also occurs).. Its function is as follows. Cleaves peptides in various proteins in a process that requires ATP hydrolysis. Has a chymotrypsin-like activity. Plays a major role in the degradation of misfolded proteins. The chain is ATP-dependent Clp protease proteolytic subunit 1 from Prochlorococcus marinus subsp. pastoris (strain CCMP1986 / NIES-2087 / MED4).